Consider the following 258-residue polypeptide: GTP cyclohydrolase FolE2 (258 aa).

Belongs to the GTP cyclohydrolase IV family.

The enzyme catalyses GTP + H2O = 7,8-dihydroneopterin 3'-triphosphate + formate + H(+). It functions in the pathway cofactor biosynthesis; 7,8-dihydroneopterin triphosphate biosynthesis; 7,8-dihydroneopterin triphosphate from GTP: step 1/1. In terms of biological role, converts GTP to 7,8-dihydroneopterin triphosphate. This chain is GTP cyclohydrolase FolE2, found in Pseudothermotoga lettingae (strain ATCC BAA-301 / DSM 14385 / NBRC 107922 / TMO) (Thermotoga lettingae).